The following is a 549-amino-acid chain: MQADFVIIGSGSAGSALAYRLSEDGKNSVLVIEAGGSDFGPFIQMPAALAWPMSMKRYNWGYLSEPEPNLNNRRITAPRGKVIGGSSSINGMVYVRGHAEDFNRWEELGASGWAYADVLPYFKRMEHSHGGEEGWRGTDGPLHVQRGGFTNPLFRAFIEAGKQAGFETTDDYNGSKQEGFGLMEQTIFSGRRWSAANAYLKPALKRKNVGMVYGLARKIVIEDGRATGVEIERGGKVEVVKATREVIVSASSFNSPKLLMLSGIGPGQHLNDMGIAVKADRPGVGANLQDHMEFYFQQVSTKPVSLYSWLPWFWQGVAGAQWLLSKGGLGASNQFEACAFLRSAPGLKQPDIQYHFLPVAISYDGKAAAKSHGFQVHVGYNLSKSRGSVTLRSPDPKAEPVLRFNYMSHPEDWEKFRHCVRLTREIFGQTAFDAYRGPEIQPGEGVQSDEQIDAFLREHLESAYHPCGTCKMGAKDDPMAVVDPQTRVIGVDGLRVADSSIFPHVTYGNLNGPSIMTGEKAADHILGKQPLARSNQEPWINPRAAVSDR.

4 to 33 serves as a coordination point for FAD; it reads DFVIIGSGSAGSALAYRLSEDGKNSVLVIE. Histidine 465 serves as the catalytic Proton acceptor.

Belongs to the GMC oxidoreductase family. The cofactor is FAD.

The enzyme catalyses choline + A = betaine aldehyde + AH2. It catalyses the reaction betaine aldehyde + NAD(+) + H2O = glycine betaine + NADH + 2 H(+). It functions in the pathway amine and polyamine biosynthesis; betaine biosynthesis via choline pathway; betaine aldehyde from choline (cytochrome c reductase route): step 1/1. In terms of biological role, involved in the biosynthesis of the osmoprotectant glycine betaine. Catalyzes the oxidation of choline to betaine aldehyde and betaine aldehyde to glycine betaine at the same rate. The polypeptide is Oxygen-dependent choline dehydrogenase (Rhizobium etli (strain CIAT 652)).